Here is a 99-residue protein sequence, read N- to C-terminus: Cell division protein FtsB (99 aa).

Topologically, residues 1 to 3 (MKF) are cytoplasmic. Residues 4-21 (FVIALIVLLGLLQYRLWS) form a helical membrane-spanning segment. The Periplasmic segment spans residues 22–99 (GDNSLPEYFV…GDRSVSSPSQ (78 aa)). Residues 31 to 73 (VLQKQIAAQQDGNAKLNERNQVLKEEIIDLKSGTEAIEERARN) are a coiled coil.

It belongs to the FtsB family. In terms of assembly, part of a complex composed of FtsB, FtsL and FtsQ.

It localises to the cell inner membrane. Functionally, essential cell division protein. May link together the upstream cell division proteins, which are predominantly cytoplasmic, with the downstream cell division proteins, which are predominantly periplasmic. The protein is Cell division protein FtsB of Shewanella sp. (strain MR-4).